A 43-amino-acid chain; its full sequence is Potassium channel toxin gamma-KTx 4.4 (43 aa).

Intrachain disulfides connect Cys-5–Cys-23, Cys-11–Cys-34, Cys-20–Cys-39, and Cys-24–Cys-41.

This sequence belongs to the ergtoxin family. Gamma-KTx 4 subfamily. In terms of tissue distribution, expressed by the venom gland.

It localises to the secreted. Reversibly blocks Kv11/ERG potassium channels. In Centruroides exilicauda (Bark scorpion), this protein is Potassium channel toxin gamma-KTx 4.4.